The primary structure comprises 208 residues: Small ribosomal subunit protein uS4 (208 aa).

The S4 RNA-binding domain occupies 98 to 160 (CRLDNVVYRM…AKKQSRIQLA (63 aa)).

Belongs to the universal ribosomal protein uS4 family. As to quaternary structure, part of the 30S ribosomal subunit. Contacts protein S5. The interaction surface between S4 and S5 is involved in control of translational fidelity.

Functionally, one of the primary rRNA binding proteins, it binds directly to 16S rRNA where it nucleates assembly of the body of the 30S subunit. With S5 and S12 plays an important role in translational accuracy. The sequence is that of Small ribosomal subunit protein uS4 from Vesicomyosocius okutanii subsp. Calyptogena okutanii (strain HA).